The primary structure comprises 250 residues: tRNA (guanine-N(1)-)-methyltransferase (250 aa).

S-adenosyl-L-methionine contacts are provided by residues Gly113 and 133–138 (VGDYVL).

The protein belongs to the RNA methyltransferase TrmD family. In terms of assembly, homodimer.

It localises to the cytoplasm. It carries out the reaction guanosine(37) in tRNA + S-adenosyl-L-methionine = N(1)-methylguanosine(37) in tRNA + S-adenosyl-L-homocysteine + H(+). Functionally, specifically methylates guanosine-37 in various tRNAs. The polypeptide is tRNA (guanine-N(1)-)-methyltransferase (Proteus mirabilis (strain HI4320)).